Reading from the N-terminus, the 477-residue chain is PTS system glucose-specific EIICB component (477 aa).

Residues 1–14 lie on the Cytoplasmic side of the membrane; that stretch reads MFKNAFANLQKVGK. Positions 1–388 constitute a PTS EIIC type-1 domain; the sequence is MFKNAFANLQ…LDLKTPGRED (388 aa). A helical membrane pass occupies residues 15 to 35; it reads SLMLPVSVLPIAGILLGVGSA. The Periplasmic segment spans residues 36–50; the sequence is NFSWLPAVVSHVMAE. Residues 51–71 form a helical membrane-spanning segment; the sequence is AGGSVFANMPLIFAIGVALGF. Residues 72–79 lie on the Cytoplasmic side of the membrane; the sequence is TNNDGVSA. A helical membrane pass occupies residues 80–100; it reads LAAVVAYGIMVKTMAVVAPLV. Residues 101–111 are Periplasmic-facing; it reads LHLPAEEIAAK. A helical transmembrane segment spans residues 112 to 132; that stretch reads HLADTGVLGGIISGAIAAYMF. Residues 133 to 151 lie on the Cytoplasmic side of the membrane; it reads NRFYRIKLPEYLGFFAGKR. The helical transmembrane segment at 152 to 172 threads the bilayer; the sequence is FVPIISGLAAIFTGVVLSFVW. The Periplasmic portion of the chain corresponds to 173–190; the sequence is PPIGTAIQAFSQWAAYQN. A helical transmembrane segment spans residues 191–211; that stretch reads PVVAFGIYGFIERCLVPFGLH. The Cytoplasmic segment spans residues 212–248; it reads HIWNVPFQMQIGEYTNAAGQVFHGDIPRYMAGDPTAG. A helical transmembrane segment spans residues 249 to 269; sequence MLSGGFLFKMYGLPAAAIAIW. Residues 270–279 are Periplasmic-facing; the sequence is HSAKPENRAK. A helical transmembrane segment spans residues 280-300; the sequence is VGGIMISAALTSFLTGITEPI. Topologically, residues 301 to 309 are cytoplasmic; the sequence is EFSFMFVAP. The helical transmembrane segment at 310–330 threads the bilayer; sequence ILYIIHAILAGLAFPICILLG. The Periplasmic portion of the chain corresponds to 331-355; it reads MRDGTSFSHGLIDFIVLSGNSSKLW. A helical membrane pass occupies residues 356–376; sequence LFPIVGAGYAIVYYTVFRVLI. At 377 to 477 the chain is on the cytoplasmic side; sequence KALDLKTPGR…TEMDEYIRNS (101 aa). Residues 399–477 form the PTS EIIB type-1 domain; sequence SEMAPALVAA…TEMDEYIRNS (79 aa). The active-site Phosphocysteine intermediate; for EIIB activity is cysteine 421. At cysteine 421 the chain carries Phosphocysteine.

The protein resides in the cell inner membrane. It catalyses the reaction N(pros)-phospho-L-histidyl-[protein] + D-glucose(out) = D-glucose 6-phosphate(in) + L-histidyl-[protein]. Its function is as follows. The phosphoenolpyruvate-dependent sugar phosphotransferase system (sugar PTS), a major carbohydrate active transport system, catalyzes the phosphorylation of incoming sugar substrates concomitantly with their translocation across the cell membrane. The enzyme II complex composed of PtsG and Crr is involved in glucose transport. Also functions as a chemoreceptor monitoring the environment for changes in sugar concentration. It can also phosphorylate mannose, methyl alpha-glucoside and 2-deoxy-glucose. The chain is PTS system glucose-specific EIICB component (ptsG) from Salmonella typhimurium (strain LT2 / SGSC1412 / ATCC 700720).